We begin with the raw amino-acid sequence, 301 residues long: Prestalk A differentiation protein A (301 aa).

This sequence belongs to the NmrA-type oxidoreductase family.

Its function is as follows. Involved in development and cell differentiation. The polypeptide is Prestalk A differentiation protein A (padA) (Dictyostelium discoideum (Social amoeba)).